We begin with the raw amino-acid sequence, 427 residues long: Four-jointed box protein 1 (427 aa).

Residues 1 to 18 (MRALSANLFAVLLMCALA) form the signal peptide. Asn-81, Asn-244, and Asn-270 each carry an N-linked (GlcNAc...) asparagine glycan.

The protein resides in the secreted. In terms of biological role, may act as an inhibitor of dendrite extension and branching. In Xiphophorus maculatus (Southern platyfish), this protein is Four-jointed box protein 1 (fjx1).